The sequence spans 472 residues: Glutamate--tRNA ligase (472 aa).

The short motif at 9–19 (PSPTGYLHVGG) is the 'HIGH' region element. Positions 98, 100, 125, and 127 each coordinate Zn(2+). The 'KMSKS' region signature appears at 237–241 (KLSKR). K240 is a binding site for ATP.

This sequence belongs to the class-I aminoacyl-tRNA synthetase family. Glutamate--tRNA ligase type 1 subfamily. In terms of assembly, monomer. Zn(2+) is required as a cofactor.

Its subcellular location is the cytoplasm. It catalyses the reaction tRNA(Glu) + L-glutamate + ATP = L-glutamyl-tRNA(Glu) + AMP + diphosphate. Functionally, catalyzes the attachment of glutamate to tRNA(Glu) in a two-step reaction: glutamate is first activated by ATP to form Glu-AMP and then transferred to the acceptor end of tRNA(Glu). This Klebsiella pneumoniae (strain 342) protein is Glutamate--tRNA ligase.